A 206-amino-acid polypeptide reads, in one-letter code: Thiamine-phosphate synthase (206 aa).

4-amino-2-methyl-5-(diphosphooxymethyl)pyrimidine-binding positions include 37–41 (QYRNK) and N69. Residues D70 and D89 each coordinate Mg(2+). Residue S108 coordinates 4-amino-2-methyl-5-(diphosphooxymethyl)pyrimidine. 135–137 (SST) is a binding site for 2-[(2R,5Z)-2-carboxy-4-methylthiazol-5(2H)-ylidene]ethyl phosphate. 4-amino-2-methyl-5-(diphosphooxymethyl)pyrimidine is bound at residue K138. 2-[(2R,5Z)-2-carboxy-4-methylthiazol-5(2H)-ylidene]ethyl phosphate contacts are provided by residues G165 and 185-186 (IS).

Belongs to the thiamine-phosphate synthase family. Mg(2+) serves as cofactor.

The enzyme catalyses 2-[(2R,5Z)-2-carboxy-4-methylthiazol-5(2H)-ylidene]ethyl phosphate + 4-amino-2-methyl-5-(diphosphooxymethyl)pyrimidine + 2 H(+) = thiamine phosphate + CO2 + diphosphate. The catalysed reaction is 2-(2-carboxy-4-methylthiazol-5-yl)ethyl phosphate + 4-amino-2-methyl-5-(diphosphooxymethyl)pyrimidine + 2 H(+) = thiamine phosphate + CO2 + diphosphate. It carries out the reaction 4-methyl-5-(2-phosphooxyethyl)-thiazole + 4-amino-2-methyl-5-(diphosphooxymethyl)pyrimidine + H(+) = thiamine phosphate + diphosphate. The protein operates within cofactor biosynthesis; thiamine diphosphate biosynthesis; thiamine phosphate from 4-amino-2-methyl-5-diphosphomethylpyrimidine and 4-methyl-5-(2-phosphoethyl)-thiazole: step 1/1. Functionally, condenses 4-methyl-5-(beta-hydroxyethyl)thiazole monophosphate (THZ-P) and 2-methyl-4-amino-5-hydroxymethyl pyrimidine pyrophosphate (HMP-PP) to form thiamine monophosphate (TMP). The protein is Thiamine-phosphate synthase of Azoarcus sp. (strain BH72).